Here is a 357-residue protein sequence, read N- to C-terminus: Cyclin-dependent kinase-like 1 (357 aa).

Positions 4–287 (YEKIGKIGEG…CEQLLHHPYF (284 aa)) constitute a Protein kinase domain. Residues 10–18 (IGEGSYGVV) and lysine 33 each bind ATP. The short motif at 45 to 51 (KKIALRE) is the [NKR]KIAxRE element. Aspartate 126 serves as the catalytic Proton acceptor.

It belongs to the protein kinase superfamily. CMGC Ser/Thr protein kinase family. CDC2/CDKX subfamily. In terms of tissue distribution, highly expressed in kidney, and to a lower extent in ovary.

Its subcellular location is the cytoplasm. It is found in the nucleus. The enzyme catalyses L-seryl-[protein] + ATP = O-phospho-L-seryl-[protein] + ADP + H(+). It catalyses the reaction L-threonyl-[protein] + ATP = O-phospho-L-threonyl-[protein] + ADP + H(+). The protein is Cyclin-dependent kinase-like 1 of Homo sapiens (Human).